The following is a 436-amino-acid chain: Protein translocase subunit SecY (436 aa).

The next 10 helical transmembrane spans lie at 18–38 (IAFT…PATG), 69–89 (LLQV…SIIV), 116–138 (YTRY…LART), 154–174 (ILTV…VMWF), 187–207 (MSLL…GQVV), 214–234 (VFAI…FVEE), 266–286 (MANV…GILI), 314–334 (PVYM…YVSI), 375–395 (VVGA…FAVI), and 396–416 (GTSQ…GVGL).

The protein belongs to the SecY/SEC61-alpha family. Component of the Sec protein translocase complex. Heterotrimer consisting of SecY, SecE and SecG subunits. The heterotrimers can form oligomers, although 1 heterotrimer is thought to be able to translocate proteins. Interacts with the ribosome. Interacts with SecDF, and other proteins may be involved. Interacts with SecA.

It is found in the cell membrane. Its function is as follows. The central subunit of the protein translocation channel SecYEG. Consists of two halves formed by TMs 1-5 and 6-10. These two domains form a lateral gate at the front which open onto the bilayer between TMs 2 and 7, and are clamped together by SecE at the back. The channel is closed by both a pore ring composed of hydrophobic SecY resides and a short helix (helix 2A) on the extracellular side of the membrane which forms a plug. The plug probably moves laterally to allow the channel to open. The ring and the pore may move independently. The polypeptide is Protein translocase subunit SecY (Micrococcus luteus (Micrococcus lysodeikticus)).